A 348-amino-acid polypeptide reads, in one-letter code: Transmembrane protease serine 12 (348 aa).

An N-terminal signal peptide occupies residues 1 to 20; it reads MRLGLLSVALLFVGSSHLYS. Residues 21–324 are Extracellular-facing; it reads DHYSPSGRHR…EHFFHASTQG (304 aa). The interval 24-46 is disordered; sequence SPSGRHRLGPSPEPAASSQQAEA. In terms of domain architecture, Peptidase S1 spans 78-318; the sequence is IIGGTEAQAG…YQKWLTEHFF (241 aa). Cys107 and Cys123 are joined by a disulfide. Active-site charge relay system residues include His122 and Asp171. Disulfide bonds link Cys206–Cys274, Cys237–Cys253, and Cys264–Cys294. Residues Asn219 and Asn249 are each glycosylated (N-linked (GlcNAc...) asparagine). The Charge relay system role is filled by Ser268. A helical transmembrane segment spans residues 325–345; it reads ILTINILRGQILIALCFVILL. The Cytoplasmic segment spans residues 346–348; it reads ATT.

The protein belongs to the peptidase S1 family. In terms of tissue distribution, in testis, expressed in spermatocytes and spermatids (at protein level).

The protein resides in the cell membrane. Its subcellular location is the cytoplasmic vesicle. The protein localises to the secretory vesicle. It localises to the acrosome. In terms of biological role, required for male fertility. Plays a critical role in sperm capacitation and acrosome reactions during fertilization, and also plays a role in the regulation of proteins involved in spermatogenesis. Regulates protein pathways that promote chromosomal synapsis formation, double-strand break repair, formation of the inner mitochondrial membrane cristae and apoptosis in developing sperm. Required for normal sperm motility and binding to the zona pellucida, potentially via a role in ADAM3 protein maturation. The protein is Transmembrane protease serine 12 of Homo sapiens (Human).